Reading from the N-terminus, the 511-residue chain is MSSSGEERGVVVAESEPPRGNRSRFAFACAILASMTSIILGYDIGVMSGAAIFIKDDLKLSDVQLEILMGILNIYSLIGSGAAGRTSDWIGRRYTIVLAGFFFFCGALLMGFATNYPFIMVGRFVAGIGVGYAMMIAPVYTTEVAPASSRGFLSSFPEIFINIGILLGYVSNYFFAKLPEHIGWRFMLGIGAVPSVFLAIGVLAMPESPRWLVMQGRLGDAFKVLDKTSNTKEEAISRLNDIKRAVGIPDDMTDDVIVVPNKKSAGKGVWKDLLVRPTPSVRHILIACLGIHFSQQASGIDAVVLYSPTIFSRAGLKSKNDQLLATVAVGVVKTLFIVVGTCLVDRFGRRALLLTSMGGMFFSLTALGTSLTVIDRNPGQTLKWAIGLAVTTVMTFVATFSLGAGPVTWVYASEIFPVRLRAQGASLGVMLNRLMSGIIGMTFLSLSKGLTIGGAFLLFAGVAVAAWVFFFTFLPETRGVPLEEIESLFGSYSANKKNNVMSKGKQVVDEQ.

Helical transmembrane passes span 25 to 45, 63 to 83, 94 to 114, 117 to 137, 156 to 176, 186 to 206, 284 to 304, 324 to 344, 351 to 371, 384 to 404, 424 to 444, and 454 to 474; these read FAFACAILASMTSIILGYDIG, VQLEILMGILNIYSLIGSGAA, YTIVLAGFFFFCGALLMGFAT, PFIMVGRFVAGIGVGYAMMIA, FPEIFINIGILLGYVSNYFFA, FMLGIGAVPSVFLAIGVLAMP, ILIACLGIHFSQQASGIDAVV, LATVAVGVVKTLFIVVGTCLV, ALLLTSMGGMFFSLTALGTSL, WAIGLAVTTVMTFVATFSLGA, GASLGVMLNRLMSGIIGMTFL, and GAFLLFAGVAVAAWVFFFTFL.

Belongs to the major facilitator superfamily. Sugar transporter (TC 2.A.1.1) family.

It is found in the membrane. In terms of biological role, plasma membrane sugar-proton symporter. The protein is Putative polyol transporter 2 (PLT2) of Arabidopsis thaliana (Mouse-ear cress).